A 194-amino-acid chain; its full sequence is Leucyl/phenylalanyl-tRNA--protein transferase (194 aa).

It belongs to the L/F-transferase family.

The protein resides in the cytoplasm. The catalysed reaction is N-terminal L-lysyl-[protein] + L-leucyl-tRNA(Leu) = N-terminal L-leucyl-L-lysyl-[protein] + tRNA(Leu) + H(+). It catalyses the reaction N-terminal L-arginyl-[protein] + L-leucyl-tRNA(Leu) = N-terminal L-leucyl-L-arginyl-[protein] + tRNA(Leu) + H(+). The enzyme catalyses L-phenylalanyl-tRNA(Phe) + an N-terminal L-alpha-aminoacyl-[protein] = an N-terminal L-phenylalanyl-L-alpha-aminoacyl-[protein] + tRNA(Phe). Functions in the N-end rule pathway of protein degradation where it conjugates Leu, Phe and, less efficiently, Met from aminoacyl-tRNAs to the N-termini of proteins containing an N-terminal arginine or lysine. In Chlorobaculum tepidum (strain ATCC 49652 / DSM 12025 / NBRC 103806 / TLS) (Chlorobium tepidum), this protein is Leucyl/phenylalanyl-tRNA--protein transferase.